The following is a 465-amino-acid chain: UDP-glucose:undecaprenyl-phosphate glucose-1-phosphate transferase (465 aa).

5 helical membrane-spanning segments follow: residues 23-43, 46-66, 82-102, 105-125, and 280-300; these read FSDILIIFLGIYFSCFINDYF, LHYVLMALVALVVFQMIGGIT, ILILKNWSLSFLLTLGFVTLF, FDLTFRTFIFWYLAVCAGFVV, and IIVSSLILILISPILLVIATA.

It belongs to the bacterial sugar transferase family.

The protein resides in the cell inner membrane. The catalysed reaction is di-trans,octa-cis-undecaprenyl phosphate + UDP-alpha-D-glucose = alpha-D-glucosyl di-trans,octa-cis-undecaprenyl diphosphate + UMP. It participates in capsule biogenesis; capsule polysaccharide biosynthesis. Its function is as follows. Is likely the initiating enzyme for the K2 capsular polysaccharide synthesis. Catalyzes the transfer of the glucose-1-phosphate moiety from UDP-Glc onto the carrier lipid undecaprenyl phosphate (C55-P), forming a phosphoanhydride bond yielding to glucosyl-pyrophosphoryl-undecaprenol (Glc-PP-C55). The protein is UDP-glucose:undecaprenyl-phosphate glucose-1-phosphate transferase of Klebsiella pneumoniae.